The primary structure comprises 344 residues: F17a-G fimbrial adhesin (344 aa).

Residues 1-22 form the signal peptide; sequence MTNFYKVFLAVFILVCCNISQA. The segment at 23-199 is receptor-binding lectin domain; sequence AVSFIGSTEN…SLNPFTLNDT (177 aa). Residues 65-66, 110-111, and 139-142 contribute to the a carbohydrate site; these read AN, DT, and STQG. Residues cysteine 75 and cysteine 132 are joined by a disulfide bond. Positions 200–344 are fimbrillin-binding domain; that stretch reads VTSCRLLTPS…GISTFTFSYQ (145 aa). The tract at residues 288-308 is disordered; it reads LKFGPDSPVKGNENQWQLSTG. Over residues 299–308 the composition is skewed to polar residues; the sequence is NENQWQLSTG.

The protein belongs to the fimbrial protein family.

Its subcellular location is the fimbrium. In terms of biological role, essential fimbrial adhesion factor that mediates binding to N-acetylglucosamine-containing receptors in the host intestinal microvilli, leading to colonization of the intestinal tissue, and diarrhea or septicemia. Also confers adhesiveness to laminin and basement membranes. The chain is F17a-G fimbrial adhesin (f17aG) from Escherichia coli.